A 299-amino-acid polypeptide reads, in one-letter code: UDP-N-acetylenolpyruvoylglucosamine reductase (299 aa).

An FAD-binding PCMH-type domain is found at 26-191 (GIGGPAKYFV…VSATFQLNAS (166 aa)). Arg170 is an active-site residue. Cys218 functions as the Proton donor in the catalytic mechanism. Glu288 is an active-site residue.

Belongs to the MurB family. FAD is required as a cofactor.

It is found in the cytoplasm. The catalysed reaction is UDP-N-acetyl-alpha-D-muramate + NADP(+) = UDP-N-acetyl-3-O-(1-carboxyvinyl)-alpha-D-glucosamine + NADPH + H(+). It participates in cell wall biogenesis; peptidoglycan biosynthesis. Functionally, cell wall formation. This Protochlamydia amoebophila (strain UWE25) protein is UDP-N-acetylenolpyruvoylglucosamine reductase.